We begin with the raw amino-acid sequence, 341 residues long: Methionine import ATP-binding protein MetN 2 (341 aa).

The region spanning 2 to 241 is the ABC transporter domain; sequence ILLENVKKIY…PQQDITKRFV (240 aa). 38–45 contributes to the ATP binding site; the sequence is GYSGAGKS.

Belongs to the ABC transporter superfamily. Methionine importer (TC 3.A.1.24) family. As to quaternary structure, the complex is composed of two ATP-binding proteins (MetN), two transmembrane proteins (MetI) and a solute-binding protein (MetQ).

The protein localises to the cell membrane. The catalysed reaction is L-methionine(out) + ATP + H2O = L-methionine(in) + ADP + phosphate + H(+). It carries out the reaction D-methionine(out) + ATP + H2O = D-methionine(in) + ADP + phosphate + H(+). In terms of biological role, part of the ABC transporter complex MetNIQ involved in methionine import. Responsible for energy coupling to the transport system. The protein is Methionine import ATP-binding protein MetN 2 of Bacillus thuringiensis subsp. konkukian (strain 97-27).